The chain runs to 106 residues: ATP-dependent Clp protease adapter protein ClpS (106 aa).

The segment covering 1–10 has biased composition (basic and acidic residues); the sequence is MSQKTVHDQD. The interval 1–23 is disordered; sequence MSQKTVHDQDNALLLETGNTKVA.

It belongs to the ClpS family. In terms of assembly, binds to the N-terminal domain of the chaperone ClpA.

Involved in the modulation of the specificity of the ClpAP-mediated ATP-dependent protein degradation. This is ATP-dependent Clp protease adapter protein ClpS from Xylella fastidiosa (strain M23).